Consider the following 1167-residue polypeptide: DNA-directed RNA polymerase subunit beta (1167 aa).

Belongs to the RNA polymerase beta chain family. In terms of assembly, the RNAP catalytic core consists of 2 alpha, 1 beta, 1 beta' and 1 omega subunit. When a sigma factor is associated with the core the holoenzyme is formed, which can initiate transcription.

It carries out the reaction RNA(n) + a ribonucleoside 5'-triphosphate = RNA(n+1) + diphosphate. Functionally, DNA-dependent RNA polymerase catalyzes the transcription of DNA into RNA using the four ribonucleoside triphosphates as substrates. In Mycolicibacterium vanbaalenii (strain DSM 7251 / JCM 13017 / BCRC 16820 / KCTC 9966 / NRRL B-24157 / PYR-1) (Mycobacterium vanbaalenii), this protein is DNA-directed RNA polymerase subunit beta.